Consider the following 142-residue polypeptide: MRLSWFRVLTVLSICLSAVATATGAEGKRKLQIGVKKRVDHCPIKSRKGDVLHMHYTGKLEDGTEFDSSLPQNQPFVFSLGTGQVIKGWDQGLLGMCEGEKRKLVIPSELGYGERGAPPKIPGGATLVFEVELLKIERRTEL.

The first 21 residues, 1 to 21 (MRLSWFRVLTVLSICLSAVAT), serve as a signal peptide directing secretion. Positions 49 to 137 (GDVLHMHYTG…VFEVELLKIE (89 aa)) constitute a PPIase FKBP-type domain. Positions 139–142 (RTEL) match the Prevents secretion from ER motif.

Belongs to the FKBP-type PPIase family. FKBP2 subfamily. Interacts with ARFGEF1/BIG1 and the C-terminal of EPB41L2. T-cells and thymus.

It localises to the endoplasmic reticulum membrane. The enzyme catalyses [protein]-peptidylproline (omega=180) = [protein]-peptidylproline (omega=0). Its activity is regulated as follows. Inhibited by both FK506 and rapamycin. Functionally, PPIases accelerate the folding of proteins. It catalyzes the cis-trans isomerization of proline imidic peptide bonds in oligopeptides. The sequence is that of Peptidyl-prolyl cis-trans isomerase FKBP2 (FKBP2) from Homo sapiens (Human).